The sequence spans 293 residues: Pseudouridine-5'-phosphate glycosidase (293 aa).

E21 functions as the Proton donor in the catalytic mechanism. Residues K81 and V101 each contribute to the substrate site. D130 is a Mn(2+) binding site. 132–134 (SQD) lines the substrate pocket. K151 acts as the Nucleophile in catalysis.

The protein belongs to the pseudouridine-5'-phosphate glycosidase family. Homotrimer. Mn(2+) serves as cofactor.

The catalysed reaction is D-ribose 5-phosphate + uracil = psi-UMP + H2O. Functionally, catalyzes the reversible cleavage of pseudouridine 5'-phosphate (PsiMP) to ribose 5-phosphate and uracil. Functions biologically in the cleavage direction, as part of a pseudouridine degradation pathway. The protein is Pseudouridine-5'-phosphate glycosidase of Thermosipho africanus (strain TCF52B).